The chain runs to 76 residues: ATP synthase subunit c (76 aa).

2 helical membrane-spanning segments follow: residues 13 to 33 (LNVV…GILI) and 55 to 75 (FLGL…AFIF).

The protein belongs to the ATPase C chain family. In terms of assembly, F-type ATPases have 2 components, F(1) - the catalytic core - and F(0) - the membrane proton channel. F(1) has five subunits: alpha(3), beta(3), gamma(1), delta(1), epsilon(1). F(0) has three main subunits: a(1), b(2) and c(10-14). The alpha and beta chains form an alternating ring which encloses part of the gamma chain. F(1) is attached to F(0) by a central stalk formed by the gamma and epsilon chains, while a peripheral stalk is formed by the delta and b chains.

It is found in the cell membrane. Its function is as follows. F(1)F(0) ATP synthase produces ATP from ADP in the presence of a proton or sodium gradient. F-type ATPases consist of two structural domains, F(1) containing the extramembraneous catalytic core and F(0) containing the membrane proton channel, linked together by a central stalk and a peripheral stalk. During catalysis, ATP synthesis in the catalytic domain of F(1) is coupled via a rotary mechanism of the central stalk subunits to proton translocation. In terms of biological role, key component of the F(0) channel; it plays a direct role in translocation across the membrane. A homomeric c-ring of between 10-14 subunits forms the central stalk rotor element with the F(1) delta and epsilon subunits. This chain is ATP synthase subunit c, found in Bifidobacterium animalis subsp. lactis (strain AD011).